The following is a 249-amino-acid chain: Large ribosomal subunit protein uL4 (249 aa).

The protein belongs to the universal ribosomal protein uL4 family. In terms of assembly, part of the 50S ribosomal subunit.

Its function is as follows. One of the primary rRNA binding proteins, this protein initially binds near the 5'-end of the 23S rRNA. It is important during the early stages of 50S assembly. It makes multiple contacts with different domains of the 23S rRNA in the assembled 50S subunit and ribosome. Forms part of the polypeptide exit tunnel. The chain is Large ribosomal subunit protein uL4 from Methanospirillum hungatei JF-1 (strain ATCC 27890 / DSM 864 / NBRC 100397 / JF-1).